The sequence spans 189 residues: Respiratory supercomplex factor 1, mitochondrial (189 aa).

Residues 6–97 (LPSSFDDDPD…TERDQRKQLE (92 aa)) form the HIG1 domain. A run of 2 helical transmembrane segments spans residues 33–49 (PLVP…LFRA) and 64–86 (MFRA…SVYY). Residues 86-122 (YKTERDQRKQLEKAMDLKKQQAKRDAWLKELEIREQE) are a coiled coil. A disordered region spans residues 142 to 189 (VKPFVADSAPDAAGRDASEEPAKESGDKKDGGSGGVLSAVKNLSWGSK). Positions 154–172 (AGRDASEEPAKESGDKKDG) are enriched in basic and acidic residues.

This sequence belongs to the RCF1 family. Associates with the respiratory chain complex III/complex IV supercomplex.

The protein localises to the mitochondrion membrane. In terms of biological role, cytochrome c oxidase subunit which plays a role in assembly of respiratory supercomplexes. In Trichophyton verrucosum (strain HKI 0517), this protein is Respiratory supercomplex factor 1, mitochondrial (RCF1).